Consider the following 260-residue polypeptide: Oxidoreductase macE (260 aa).

This sequence belongs to the oxidoreductase OpS7 family.

The protein operates within secondary metabolite biosynthesis; terpenoid biosynthesis. Oxidoreductase; part of the gene cluster that mediates the biosynthesis of macrophorins, isoprenoid epoxycyclohexenones containing cyclized drimane moieties. The first step of the pathway is the synthesis of 6-methylsalicylic acid (6-MSA) by the polyketide synthase macA. 6-MSA is then converted to m-cresol by the decarboxylase macB. The cytochrome P450 monooxygenase macC then catalyzes the oxidation of m-cresol to toluquinol. Epoxidation of toluquinol is then performed by the short chain dehydrogenase macD, with the help of macE, and a further prenylation by macG leads to 7-deacetoxyyanuthone A. The next step is the hydroxylation of C-22 of 7-deacetoxyyanuthone A by the cytochrome P450 monooxygenase macH to yield 22-deacetylyanuthone A. O-Mevalon transferase macI then attaches mevalon to the hydroxyl group of 22-deacetylyanuthone A to produce yanuthone E. The terpene cyclase macJ catalyzes the cyclization of 22-deacetylyanuthone A to macrophorin A. MacJ is also able to catalyze cyclization of yanuthone E and 7-deacetoxyyanuthone A to their corresponding macrophorins. The macJ products can be further modified by macH and macJ, as well as by the FAD-dependent monooxygenase macF, to produce additional macrophorins, including 4'-oxomacrophorin A, 4'-oxomacrophorin D and 4'-oxomacrophorin E. This Penicillium terrestre protein is Oxidoreductase macE.